A 714-amino-acid polypeptide reads, in one-letter code: Polyribonucleotide nucleotidyltransferase (714 aa).

The Mg(2+) site is built by D488 and D494. The region spanning 555–614 (PRIEVMNIPTDKIRDVIGSGGKVIREIVEKTGAKINIEDDGTVKIASSNGKEIEAAKKWI) is the KH domain. Positions 624-692 (GEIYEGTVVK…ERGKVRLSMK (69 aa)) constitute an S1 motif domain.

It belongs to the polyribonucleotide nucleotidyltransferase family. Mg(2+) serves as cofactor.

Its subcellular location is the cytoplasm. It catalyses the reaction RNA(n+1) + phosphate = RNA(n) + a ribonucleoside 5'-diphosphate. Involved in mRNA degradation. Catalyzes the phosphorolysis of single-stranded polyribonucleotides processively in the 3'- to 5'-direction. The protein is Polyribonucleotide nucleotidyltransferase of Brucella suis biovar 1 (strain 1330).